The chain runs to 198 residues: Putative mycofactocin biosynthesis transcriptional regulator MftR (198 aa).

Residues 12–72 (STTPHHISDV…GDFSTHLAQL (61 aa)) enclose the HTH tetR-type domain. The segment at residues 35 to 54 (SVDDIARAAGIARRTLFRYY) is a DNA-binding region (H-T-H motif).

In terms of biological role, may regulate a gene cluster involved in mycofactocin expression. Mycofactocin is a conserved polypeptide that might serve as an electron carrier. In Mycobacterium tuberculosis (strain ATCC 25618 / H37Rv), this protein is Putative mycofactocin biosynthesis transcriptional regulator MftR (mftR).